The chain runs to 171 residues: Crossover junction endodeoxyribonuclease RuvC (171 aa).

Residues aspartate 11, glutamate 71, and aspartate 143 contribute to the active site. Mg(2+) contacts are provided by aspartate 11, glutamate 71, and aspartate 143.

It belongs to the RuvC family. In terms of assembly, homodimer which binds Holliday junction (HJ) DNA. The HJ becomes 2-fold symmetrical on binding to RuvC with unstacked arms; it has a different conformation from HJ DNA in complex with RuvA. In the full resolvosome a probable DNA-RuvA(4)-RuvB(12)-RuvC(2) complex forms which resolves the HJ. Mg(2+) is required as a cofactor.

The protein localises to the cytoplasm. It carries out the reaction Endonucleolytic cleavage at a junction such as a reciprocal single-stranded crossover between two homologous DNA duplexes (Holliday junction).. Functionally, the RuvA-RuvB-RuvC complex processes Holliday junction (HJ) DNA during genetic recombination and DNA repair. Endonuclease that resolves HJ intermediates. Cleaves cruciform DNA by making single-stranded nicks across the HJ at symmetrical positions within the homologous arms, yielding a 5'-phosphate and a 3'-hydroxyl group; requires a central core of homology in the junction. The consensus cleavage sequence is 5'-(A/T)TT(C/G)-3'. Cleavage occurs on the 3'-side of the TT dinucleotide at the point of strand exchange. HJ branch migration catalyzed by RuvA-RuvB allows RuvC to scan DNA until it finds its consensus sequence, where it cleaves and resolves the cruciform DNA. This chain is Crossover junction endodeoxyribonuclease RuvC, found in Bartonella tribocorum (strain CIP 105476 / IBS 506).